The chain runs to 124 residues: MALTKDDILNAIAEMPVMELVELIEAAEEKFGVDASAAVAVAAPAAGGEAAAEEKTEFDVVLKAAGANKVSAIKAVRGATGLGLKEAKAMVESAPVAVKEGVSKDEAEELKKQLEEAGAEVEVK.

The protein belongs to the bacterial ribosomal protein bL12 family. In terms of assembly, homodimer. Part of the ribosomal stalk of the 50S ribosomal subunit. Forms a multimeric L10(L12)X complex, where L10 forms an elongated spine to which 2 to 4 L12 dimers bind in a sequential fashion. Binds GTP-bound translation factors.

Its function is as follows. Forms part of the ribosomal stalk which helps the ribosome interact with GTP-bound translation factors. Is thus essential for accurate translation. This Idiomarina loihiensis (strain ATCC BAA-735 / DSM 15497 / L2-TR) protein is Large ribosomal subunit protein bL12.